Reading from the N-terminus, the 322-residue chain is Homoserine kinase (322 aa).

106–116 (ALSSGMGGSAA) serves as a coordination point for ATP.

This sequence belongs to the GHMP kinase family. Homoserine kinase subfamily.

The protein localises to the cytoplasm. The enzyme catalyses L-homoserine + ATP = O-phospho-L-homoserine + ADP + H(+). Its pathway is amino-acid biosynthesis; L-threonine biosynthesis; L-threonine from L-aspartate: step 4/5. Functionally, catalyzes the ATP-dependent phosphorylation of L-homoserine to L-homoserine phosphate. In Xanthomonas campestris pv. campestris (strain B100), this protein is Homoserine kinase.